The sequence spans 386 residues: S-adenosylmethionine synthase (386 aa).

Residue H14 participates in ATP binding. D16 contacts Mg(2+). E42 is a binding site for K(+). L-methionine-binding residues include E55 and Q98. A flexible loop region spans residues Q98–G108. ATP contacts are provided by residues D162 to K164, R230 to F231, D239, R245 to K246, A262, and K266. An L-methionine-binding site is contributed by D239. K270 contributes to the L-methionine binding site.

This sequence belongs to the AdoMet synthase family. Homotetramer; dimer of dimers. It depends on Mg(2+) as a cofactor. The cofactor is K(+).

It is found in the cytoplasm. It carries out the reaction L-methionine + ATP + H2O = S-adenosyl-L-methionine + phosphate + diphosphate. The protein operates within amino-acid biosynthesis; S-adenosyl-L-methionine biosynthesis; S-adenosyl-L-methionine from L-methionine: step 1/1. In terms of biological role, catalyzes the formation of S-adenosylmethionine (AdoMet) from methionine and ATP. The overall synthetic reaction is composed of two sequential steps, AdoMet formation and the subsequent tripolyphosphate hydrolysis which occurs prior to release of AdoMet from the enzyme. The polypeptide is S-adenosylmethionine synthase (Salinibacter ruber (strain DSM 13855 / M31)).